We begin with the raw amino-acid sequence, 108 residues long: Iron-sulfur cluster assembly protein CyaY (108 aa).

The protein belongs to the frataxin family.

Its function is as follows. Involved in iron-sulfur (Fe-S) cluster assembly. May act as a regulator of Fe-S biogenesis. The chain is Iron-sulfur cluster assembly protein CyaY from Burkholderia vietnamiensis (strain G4 / LMG 22486) (Burkholderia cepacia (strain R1808)).